A 377-amino-acid polypeptide reads, in one-letter code: Signal peptide peptidase (377 aa).

Residues 1 to 27 (MDSALSDPHNGSAEAGGPTNSTTRPPS) form a disordered region. The Lumenal portion of the chain corresponds to 1–31 (MDSALSDPHNGSAEAGGPTNSTTRPPSTPEG). N-linked (GlcNAc...) asparagine glycosylation is found at Asn10 and Asn20. The helical transmembrane segment at 32–52 (IALAYGSLLLMALLPIFFGAL) threads the bilayer. Topologically, residues 53 to 77 (RSVRCARGKNASDMPETITSRDAAR) are cytoplasmic. Residues 78 to 98 (FPIIASCTLLGLYLFFKIFSQ) traverse the membrane as a helical segment. The Lumenal segment spans residues 99 to 100 (EY). A helical transmembrane segment spans residues 101–121 (INLLLSMYFFVLGILALSHTI). Over 122 to 157 (SPFMNKFFPASFPNRQYQLLFTQGSGENKEEIINYE) the chain is Cytoplasmic. A helical transmembrane segment spans residues 158–178 (FDTKDLVCLGLSSIVGVWYLL). The Lumenal segment spans residues 179–181 (RKH). Residues 182-202 (WIANNLFGLAFSLNGVELLHL) form a helical membrane-spanning segment. The Cytoplasmic segment spans residues 203 to 209 (NNVSTGC). A helical membrane pass occupies residues 210–230 (ILLGGLFIYDVFWVFGTNVMV). The active site involves Asp219. Over 231 to 256 (TVAKSFEAPIKLVFPQDLLEKGLEAN) the chain is Lumenal. Residues 257–277 (NFAMLGLGDVVIPGIFIALLL) form a helical membrane-spanning segment. The active site involves Asp265. At 278-290 (RFDISLKKNTHTY) the chain is on the cytoplasmic side. The helical transmembrane segment at 291–311 (FYTSFAAYIFGLGLTIFIMHI) threads the bilayer. Residues 312-314 (FKH) lie on the Lumenal side of the membrane. Residues 315–335 (AQPALLYLVPACIGFPVLVAL) traverse the membrane as a helical segment. A PAL motif is present at residues 317–319 (PAL). Topologically, residues 336–377 (AKGEVTEMFSYEESNPKDPAAVTESKEGTEASASKGLEKKEK) are cytoplasmic. The segment at 345–377 (SYEESNPKDPAAVTESKEGTEASASKGLEKKEK) is disordered. Ser367 carries the post-translational modification Phosphoserine.

The protein belongs to the peptidase A22B family. Monomer. Homodimer. Interacts with RNF139. Interacts with DERL1 and XBP1 isoform 1. N-glycosylated. In terms of tissue distribution, widely expressed with highest levels in kidney, liver, placenta, lung, leukocytes and small intestine and reduced expression in heart and skeletal muscle. Expressed abundantly in the CNS with highest levels in thalamus and medulla.

The protein localises to the endoplasmic reticulum membrane. The protein resides in the membrane. Its subcellular location is the cell membrane. Catalyzes intramembrane proteolysis of signal peptides that have been removed from precursors of secretory and membrane proteins, resulting in the release of the fragment from the ER membrane into the cytoplasm. Required to generate lymphocyte cell surface (HLA-E) epitopes derived from MHC class I signal peptides. May be necessary for the removal of the signal peptide that remains attached to the hepatitis C virus core protein after the initial proteolytic processing of the polyprotein. Involved in the intramembrane cleavage of the integral membrane protein PSEN1. Cleaves the integral membrane protein XBP1 isoform 1 in a DERL1/RNF139-dependent manner. May play a role in graft rejection. The sequence is that of Signal peptide peptidase from Homo sapiens (Human).